Consider the following 690-residue polypeptide: Elongation factor G (690 aa).

The 276-residue stretch at 8–283 folds into the tr-type G domain; sequence SRCRNIGIMA…AVVDFLPSPS (276 aa). Residues 17–24, 81–85, and 135–138 each bind GTP; these read AHIDAGKT, DTPGH, and NKMD.

This sequence belongs to the TRAFAC class translation factor GTPase superfamily. Classic translation factor GTPase family. EF-G/EF-2 subfamily.

The protein resides in the cytoplasm. Its function is as follows. Catalyzes the GTP-dependent ribosomal translocation step during translation elongation. During this step, the ribosome changes from the pre-translocational (PRE) to the post-translocational (POST) state as the newly formed A-site-bound peptidyl-tRNA and P-site-bound deacylated tRNA move to the P and E sites, respectively. Catalyzes the coordinated movement of the two tRNA molecules, the mRNA and conformational changes in the ribosome. In Anaplasma marginale (strain St. Maries), this protein is Elongation factor G.